A 1598-amino-acid chain; its full sequence is Pentafunctional AROM polypeptide (1598 aa).

Positions 1–384 (MGVPTKISIL…YEPRACTVSN (384 aa)) are 3-dehydroquinate synthase. NAD(+)-binding positions include 44–46 (DTN), 81–84 (ESSK), 114–116 (GGV), and D119. 7-phospho-2-dehydro-3-deoxy-D-arabino-heptonate is bound at residue R130. NAD(+) is bound at residue 139–140 (TT). 7-phospho-2-dehydro-3-deoxy-D-arabino-heptonate-binding residues include D146 and K152. K161 contributes to the NAD(+) binding site. N162 contacts 7-phospho-2-dehydro-3-deoxy-D-arabino-heptonate. NAD(+) contacts are provided by residues 179–182 (FLNT) and N190. E194 is a binding site for Zn(2+). 7-phospho-2-dehydro-3-deoxy-D-arabino-heptonate is bound by residues 194 to 197 (EVIK) and K250. The active-site Proton acceptor; for 3-dehydroquinate synthase activity is E260. 7-phospho-2-dehydro-3-deoxy-D-arabino-heptonate contacts are provided by residues 264 to 268 (RNLLN) and H271. H271 is a binding site for Zn(2+). The active-site Proton acceptor; for 3-dehydroquinate synthase activity is H275. H287 and K356 together coordinate 7-phospho-2-dehydro-3-deoxy-D-arabino-heptonate. H287 serves as a coordination point for Zn(2+). The interval 397–842 (VYPGFPKSLN…WDTLAQTFKV (446 aa)) is EPSP synthase. The active-site For EPSP synthase activity is the C824. A shikimate kinase region spans residues 867-1059 (AASIFIIGMR…RRKENTFFVS (193 aa)). 874–881 (GMRGAGKT) is a binding site for ATP. Positions 1060–1280 (LTFPDLTPAS…AAPGQLSARE (221 aa)) are 3-dehydroquinase. The active-site Proton acceptor; for 3-dehydroquinate dehydratase activity is H1183. Catalysis depends on K1211, which acts as the Schiff-base intermediate with substrate; for 3-dehydroquinate dehydratase activity. Residues 1293–1598 (AKKFAVIGKP…GVSSSDDIIS (306 aa)) are shikimate dehydrogenase.

This sequence in the N-terminal section; belongs to the sugar phosphate cyclases superfamily. Dehydroquinate synthase family. The protein in the 2nd section; belongs to the EPSP synthase family. It in the 3rd section; belongs to the shikimate kinase family. In the 4th section; belongs to the type-I 3-dehydroquinase family. This sequence in the C-terminal section; belongs to the shikimate dehydrogenase family. In terms of assembly, homodimer. It depends on Zn(2+) as a cofactor.

It localises to the cytoplasm. The enzyme catalyses 7-phospho-2-dehydro-3-deoxy-D-arabino-heptonate = 3-dehydroquinate + phosphate. It catalyses the reaction 3-dehydroquinate = 3-dehydroshikimate + H2O. The catalysed reaction is shikimate + NADP(+) = 3-dehydroshikimate + NADPH + H(+). It carries out the reaction shikimate + ATP = 3-phosphoshikimate + ADP + H(+). The enzyme catalyses 3-phosphoshikimate + phosphoenolpyruvate = 5-O-(1-carboxyvinyl)-3-phosphoshikimate + phosphate. Its pathway is metabolic intermediate biosynthesis; chorismate biosynthesis; chorismate from D-erythrose 4-phosphate and phosphoenolpyruvate: step 2/7. It participates in metabolic intermediate biosynthesis; chorismate biosynthesis; chorismate from D-erythrose 4-phosphate and phosphoenolpyruvate: step 3/7. It functions in the pathway metabolic intermediate biosynthesis; chorismate biosynthesis; chorismate from D-erythrose 4-phosphate and phosphoenolpyruvate: step 4/7. The protein operates within metabolic intermediate biosynthesis; chorismate biosynthesis; chorismate from D-erythrose 4-phosphate and phosphoenolpyruvate: step 5/7. Its pathway is metabolic intermediate biosynthesis; chorismate biosynthesis; chorismate from D-erythrose 4-phosphate and phosphoenolpyruvate: step 6/7. The AROM polypeptide catalyzes 5 consecutive enzymatic reactions in prechorismate polyaromatic amino acid biosynthesis. The protein is Pentafunctional AROM polypeptide of Paracoccidioides lutzii (strain ATCC MYA-826 / Pb01) (Paracoccidioides brasiliensis).